A 178-amino-acid chain; its full sequence is Leukemia NUP98 fusion partner 1 (178 aa).

3 disordered regions span residues 28–55 (EDQR…PLPV), 89–108 (SEDG…HSKI), and 147–178 (IKSR…KGPE). Residues 34-47 (RERHRLQATSHRKT) are compositionally biased toward basic residues. Positions 147 to 167 (IKSRKKVEEERSSRKEEHGEA) are enriched in basic and acidic residues.

This is Leukemia NUP98 fusion partner 1 (LNP1) from Homo sapiens (Human).